A 783-amino-acid polypeptide reads, in one-letter code: Serine/threonine-protein kinase SIK1 (783 aa).

The Protein kinase domain maps to 27–278 (YDIERTLGKG…IAQIRQHRWM (252 aa)). Residues 33–41 (LGKGNFAVV) and Lys56 contribute to the ATP site. Asp149 acts as the Proton acceptor in catalysis. Thr182 bears the Phosphothreonine; by LKB1 and GSK3-beta mark. Ser186 carries the phosphoserine; by autocatalysis modification. In terms of domain architecture, UBA spans 303-343 (DYDEQALGIMQTLGVDRQRTVESLQNSSYNHFAAIYYLLLE). Thr322 carries the post-translational modification Phosphothreonine; by CaMK1. 2 disordered regions span residues 353-377 (CARP…VPQE) and 449-477 (RQGP…LAEV). At Thr473 the chain carries Phosphothreonine; by PKA. Residue Ser575 is modified to Phosphoserine; by PKA. The RK-rich region; required for cAMP responsiveness and nuclear localization stretch occupies residues 583-612 (LKAFRQQLRKTTRTKGFLGLNKIKGLARQV). Positions 619–643 (RASRGGLSPFHAPAQSPGLHGGAAG) are disordered.

It belongs to the protein kinase superfamily. CAMK Ser/Thr protein kinase family. AMPK subfamily. In terms of assembly, interacts with ATP1A1. Interacts (when phosphorylated on Thr-182 and Ser-186) with YWHAZ. Interacts (when phosphorylated at Thr-473 and/or Ser-575) with 14-3-3 proteins; the interaction inhibits kinase activity towards TORCs. There is a cooperative effect of the phosphorylation sites in 14-3-3 binding as the interaction is stronger when both Thr-473 and Ser-575 are modified. The cofactor is Mg(2+). Phosphorylated at Thr-182 by STK11/LKB1 in complex with STE20-related adapter-alpha (STRADA) pseudo kinase and CAB39, leading to its activation. Phosphorylation at Thr-182 promotes autophosphorylation at Ser-186, which is required for sustained activity. Autophosphorylation at Ser-186 is maintained by sequential phosphorylation at Thr-182 by GSK3-beta. GSK3-beta cannot initiate phosphorylation at Thr-182, it can only maintain it. Phosphorylation at Ser-575 in response to cAMP signaling promotes translocation to the cytoplasm. Phosphorylation at Thr-322 by CaMK1 following intracellular sodium concentration leads to activation.

It localises to the cytoplasm. The protein resides in the nucleus. It catalyses the reaction L-seryl-[protein] + ATP = O-phospho-L-seryl-[protein] + ADP + H(+). The catalysed reaction is L-threonyl-[protein] + ATP = O-phospho-L-threonyl-[protein] + ADP + H(+). With respect to regulation, activated by phosphorylation on Thr-182. Also activated by phosphorylation on Thr-322 in response to increases in intracellular sodium in parallel with elevations in intracellular calcium through the reversible sodium/calcium exchanger. Inhibited by phosphorylation at Thr-473 and Ser-575, probably by PKA, which triggers interaction with 14-3-3 proteins. In terms of biological role, serine/threonine-protein kinase involved in various processes such as cell cycle regulation, gluconeogenesis and lipogenesis regulation, muscle growth and differentiation and tumor suppression. Phosphorylates HDAC4, HDAC5, PPME1, SREBF1, CRTC1/TORC1. Inhibits CREB activity by phosphorylating and inhibiting activity of TORCs, the CREB-specific coactivators, like CRTC2/TORC2 and CRTC3/TORC3 in response to cAMP signaling. Acts as a tumor suppressor and plays a key role in p53/TP53-dependent anoikis, a type of apoptosis triggered by cell detachment: required for phosphorylation of p53/TP53 in response to loss of adhesion and is able to suppress metastasis. Part of a sodium-sensing signaling network, probably by mediating phosphorylation of PPME1: following increases in intracellular sodium, SIK1 is activated by CaMK1 and phosphorylates PPME1 subunit of protein phosphatase 2A (PP2A), leading to dephosphorylation of sodium/potassium-transporting ATPase ATP1A1 and subsequent increase activity of ATP1A1. Acts as a regulator of muscle cells by phosphorylating and inhibiting class II histone deacetylases HDAC4 and HDAC5, leading to promote expression of MEF2 target genes in myocytes. Also required during cardiomyogenesis by regulating the exit of cardiomyoblasts from the cell cycle via down-regulation of CDKN1C/p57Kip2. Acts as a regulator of hepatic gluconeogenesis by phosphorylating and repressing the CREB-specific coactivators CRTC1/TORC1 and CRTC2/TORC2, leading to inhibit CREB activity. Also regulates hepatic lipogenesis by phosphorylating and inhibiting SREBF1. In concert with CRTC1/TORC1, regulates the light-induced entrainment of the circadian clock by attenuating PER1 induction; represses CREB-mediated transcription of PER1 by phosphorylating and deactivating CRTC1/TORC1. This Homo sapiens (Human) protein is Serine/threonine-protein kinase SIK1 (SIK1).